A 351-amino-acid polypeptide reads, in one-letter code: Cell shape-determining protein MreB (351 aa).

ATP is bound by residues 20–22, 169–171, 217–220, and 299–302; these read TAN, GGT, ERIK, and GGAL.

This sequence belongs to the FtsA/MreB family. Forms polymers.

The protein localises to the cytoplasm. Forms membrane-associated dynamic filaments that are essential for cell shape determination. Acts by regulating cell wall synthesis and cell elongation, and thus cell shape. A feedback loop between cell geometry and MreB localization may maintain elongated cell shape by targeting cell wall growth to regions of negative cell wall curvature. This Pasteurella multocida (strain Pm70) protein is Cell shape-determining protein MreB.